Reading from the N-terminus, the 290-residue chain is ATP synthase gamma chain (290 aa).

The protein belongs to the ATPase gamma chain family. As to quaternary structure, F-type ATPases have 2 components, CF(1) - the catalytic core - and CF(0) - the membrane proton channel. CF(1) has five subunits: alpha(3), beta(3), gamma(1), delta(1), epsilon(1). CF(0) has three main subunits: a, b and c.

It is found in the cell inner membrane. Functionally, produces ATP from ADP in the presence of a proton gradient across the membrane. The gamma chain is believed to be important in regulating ATPase activity and the flow of protons through the CF(0) complex. The protein is ATP synthase gamma chain of Bradyrhizobium diazoefficiens (strain JCM 10833 / BCRC 13528 / IAM 13628 / NBRC 14792 / USDA 110).